The chain runs to 526 residues: Probable polyol transporter 4 (526 aa).

2 disordered regions span residues 1–21 and 28–47; these read MMKN…AVSV and YQRM…AEAR. Residues 29-47 are compositionally biased toward basic and acidic residues; sequence QRMDSDAEESQNHREAEAR. The next 12 membrane-spanning stretches (helical) occupy residues 63 to 83, 92 to 112, 125 to 145, 153 to 173, 180 to 200, 215 to 235, 300 to 320, 340 to 360, 371 to 391, 395 to 415, 437 to 457, and 465 to 485; these read SLNN…VLFI, VQTE…SLAG, MALA…APSF, TLAG…IAEI, GFFT…GYVS, IMLA…CVIP, MLIV…DATV, AATV…TFLI, VSTI…TFLG, LGIT…SIGM, ALGA…FLSV, and GTFF…YVLV.

This sequence belongs to the major facilitator superfamily. Sugar transporter (TC 2.A.1.1) family.

Its subcellular location is the membrane. Its function is as follows. Plasma membrane sugar-proton symporter. The protein is Probable polyol transporter 4 (PLT4) of Arabidopsis thaliana (Mouse-ear cress).